A 422-amino-acid chain; its full sequence is 5'-deoxyadenosine deaminase (422 aa).

Zn(2+) contacts are provided by His57 and His59. 2 residues coordinate substrate: Glu86 and His178. His205 contacts Zn(2+). Positions 208 and 294 each coordinate substrate. Residue Asp294 participates in Zn(2+) binding.

Belongs to the metallo-dependent hydrolases superfamily. MTA/SAH deaminase family. Homotetramer. It depends on Zn(2+) as a cofactor.

The enzyme catalyses 5'-deoxyadenosine + H2O + H(+) = 5'-deoxyinosine + NH4(+). It carries out the reaction S-adenosyl-L-homocysteine + H2O + H(+) = S-inosyl-L-homocysteine + NH4(+). It catalyses the reaction S-methyl-5'-thioadenosine + H2O + H(+) = S-methyl-5'-thioinosine + NH4(+). The catalysed reaction is adenosine + H2O + H(+) = inosine + NH4(+). It participates in amino-acid biosynthesis; S-adenosyl-L-methionine biosynthesis. In terms of biological role, catalyzes the deamination of three SAM-derived enzymatic products, namely 5'-deoxyadenosine, S-adenosyl-L-homocysteine, and 5'-methylthioadenosine, to produce the inosine analogs. Can also deaminate adenosine. The preferred substrate for this enzyme is 5'-deoxyadenosine, but all these substrates are efficiently deaminated. Likely functions in a S-adenosyl-L-methionine (SAM) recycling pathway from S-adenosyl-L-homocysteine (SAH) produced from SAM-dependent methylation reactions. May also be involved in the recycling of 5'-deoxyadenosine, whereupon the 5'-deoxyribose moiety of 5'-deoxyinosine is further metabolized to deoxyhexoses used for the biosynthesis of aromatic amino acids in methanogens. The sequence is that of 5'-deoxyadenosine deaminase from Methanococcus maripaludis (strain C7 / ATCC BAA-1331).